The sequence spans 123 residues: Guanine nucleotide exchange factor MSS4 (123 aa).

Position 1 is an N-acetylmethionine (methionine 1). Residues 9-123 (ELVSAEGRNR…YVALERVSHE (115 aa)) enclose the MSS4 domain. 4 residues coordinate Zn(2+): cysteine 23, cysteine 26, cysteine 94, and cysteine 97.

Belongs to the DSS4/MSS4 family. In terms of assembly, interacts with RAB8A.

In terms of biological role, guanine-nucleotide-releasing protein that acts on members of the SEC4/YPT1/RAB subfamily. Stimulates GDP release from both YPT1, RAB3A and RAB10, but is less active on these proteins than on the SEC4 protein. Might play a general role in vesicular transport. The chain is Guanine nucleotide exchange factor MSS4 from Mus musculus (Mouse).